The chain runs to 260 residues: Vesicle-associated membrane protein 7B (260 aa).

Topologically, residues 1-189 (MPIIYSLVAR…KCAMWWKNVK (189 aa)) are cytoplasmic. The region spanning 7–110 (LVARGSSVLA…GMNSDFSRTL (104 aa)) is the Longin domain. One can recognise a v-SNARE coiled-coil homology domain in the interval 125-186 (TMSRTMAEID…KQLKCAMWWK (62 aa)). Residues 190–210 (LMLVLGAIVLIIIFIIVMSYC) form a helical; Anchor for type IV membrane protein membrane-spanning segment. Residues 211-260 (DGFRSGSKCRSSPSSNSTPTPTPTETPTPTPTPTSTPTPSQLLETLLNQF) lie on the Vesicular side of the membrane. The interval 215-250 (SGSKCRSSPSSNSTPTPTPTETPTPTPTPTSTPTPS) is disordered. Over residues 230–246 (TPTPTETPTPTPTPTST) the composition is skewed to pro residues.

The protein belongs to the synaptobrevin family.

It localises to the cytoplasmic vesicle. Its subcellular location is the secretory vesicle membrane. The protein resides in the golgi apparatus. The protein localises to the trans-Golgi network membrane. It is found in the late endosome membrane. It localises to the lysosome membrane. Its subcellular location is the endoplasmic reticulum membrane. The protein resides in the phagosome membrane. Involved in the targeting and/or fusion of transport vesicles to their target membrane during transport of proteins from the early endosome to the lysosome. Required for heterotypic fusion of late endosomes with lysosomes and homotypic lysosomal fusion. In Dictyostelium discoideum (Social amoeba), this protein is Vesicle-associated membrane protein 7B.